Here is an 808-residue protein sequence, read N- to C-terminus: DNA gyrase subunit B (808 aa).

A Toprim domain is found at 429–544 (SELFIVEGDS…KGYLYIAQPP (116 aa)). Mg(2+) is bound by residues Glu-435, Asp-509, and Asp-511.

This sequence belongs to the type II topoisomerase GyrB family. As to quaternary structure, heterotetramer, composed of two GyrA and two GyrB chains. In the heterotetramer, GyrA contains the active site tyrosine that forms a transient covalent intermediate with DNA, while GyrB binds cofactors and catalyzes ATP hydrolysis. The cofactor is Mg(2+). Requires Mn(2+) as cofactor. Ca(2+) is required as a cofactor.

Its subcellular location is the cytoplasm. The enzyme catalyses ATP-dependent breakage, passage and rejoining of double-stranded DNA.. A type II topoisomerase that negatively supercoils closed circular double-stranded (ds) DNA in an ATP-dependent manner to modulate DNA topology and maintain chromosomes in an underwound state. Negative supercoiling favors strand separation, and DNA replication, transcription, recombination and repair, all of which involve strand separation. Also able to catalyze the interconversion of other topological isomers of dsDNA rings, including catenanes and knotted rings. Type II topoisomerases break and join 2 DNA strands simultaneously in an ATP-dependent manner. In Rickettsia felis (strain ATCC VR-1525 / URRWXCal2) (Rickettsia azadi), this protein is DNA gyrase subunit B.